Reading from the N-terminus, the 357-residue chain is Gas vesicle ATPase GvpN (357 aa).

The span at 22–36 (ATSASKNGGRTTPSA) shows a compositional bias: polar residues. The segment at 22 to 43 (ATSASKNGGRTTPSALTPRPRS) is disordered. 72-79 (GPAGTGKT) contributes to the ATP binding site.

The protein belongs to the CbbQ/NirQ/NorQ/GpvN family. Forms homodimers, probably interacts with other GV proteins including GvpA.

It localises to the gas vesicle. It is found in the cytoplasm. It catalyses the reaction ATP + H2O = ADP + phosphate + H(+). In terms of biological role, an ATPase that functions in gas vesicle formation. A minor component of the gas vesicle, also found in soluble extracts. Gas vesicles (GV) are hollow, gas filled proteinaceous nanostructures. During planktonic growth they allow positioning of the organism at a favorable depth for light or nutrient acquisition. The chain is Gas vesicle ATPase GvpN from Ancylobacter aquaticus.